The chain runs to 88 residues: Small ribosomal subunit protein bS18 (88 aa).

The protein belongs to the bacterial ribosomal protein bS18 family. In terms of assembly, part of the 30S ribosomal subunit. Forms a tight heterodimer with protein bS6.

In terms of biological role, binds as a heterodimer with protein bS6 to the central domain of the 16S rRNA, where it helps stabilize the platform of the 30S subunit. The chain is Small ribosomal subunit protein bS18 from Syntrophus aciditrophicus (strain SB).